The sequence spans 170 residues: Mitochondrial fission 1 protein A (170 aa).

The TPR repeat unit spans residues 90–123 (REKLYLLAVGYYRSGNYSRSRQLVDRCIEMQADW). The chain crosses the membrane as a helical span at residues 142-162 (VIGIGITATAFGAVGLIAGGI).

It belongs to the FIS1 family. Interacts with ARC5.

Its subcellular location is the mitochondrion outer membrane. It is found in the peroxisome membrane. Functionally, component of the peroxisomal and mitochondrial division machineries. Plays a role in promoting the fission of mitochondria and peroxisomes. This Arabidopsis thaliana (Mouse-ear cress) protein is Mitochondrial fission 1 protein A (FIS1A).